The chain runs to 487 residues: Probable cytochrome P450 313a5 (487 aa).

Tyr223 is subject to Phosphotyrosine. Cys433 lines the heme pocket.

The protein belongs to the cytochrome P450 family. Requires heme as cofactor.

It is found in the endoplasmic reticulum membrane. Its subcellular location is the microsome membrane. Its function is as follows. May be involved in the metabolism of insect hormones and in the breakdown of synthetic insecticides. The polypeptide is Probable cytochrome P450 313a5 (Cyp313a5) (Drosophila melanogaster (Fruit fly)).